Reading from the N-terminus, the 357-residue chain is 3-isopropylmalate dehydrogenase (357 aa).

Residue 75-88 (GPKWEHLPPAEQPE) participates in NAD(+) binding. Residues Arg96, Arg106, Arg135, and Asp224 each contribute to the substrate site. Asp224, Asp248, and Asp252 together coordinate Mg(2+). Residue 282–294 (GSAPDIAGQGIAN) coordinates NAD(+).

This sequence belongs to the isocitrate and isopropylmalate dehydrogenases family. LeuB type 1 subfamily. As to quaternary structure, homodimer. It depends on Mg(2+) as a cofactor. Mn(2+) serves as cofactor.

It is found in the cytoplasm. It catalyses the reaction (2R,3S)-3-isopropylmalate + NAD(+) = 4-methyl-2-oxopentanoate + CO2 + NADH. The protein operates within amino-acid biosynthesis; L-leucine biosynthesis; L-leucine from 3-methyl-2-oxobutanoate: step 3/4. In terms of biological role, catalyzes the oxidation of 3-carboxy-2-hydroxy-4-methylpentanoate (3-isopropylmalate) to 3-carboxy-4-methyl-2-oxopentanoate. The product decarboxylates to 4-methyl-2 oxopentanoate. The polypeptide is 3-isopropylmalate dehydrogenase (Desulfotalea psychrophila (strain LSv54 / DSM 12343)).